A 188-amino-acid polypeptide reads, in one-letter code: Elongation factor P (188 aa).

This sequence belongs to the elongation factor P family.

It localises to the cytoplasm. The protein operates within protein biosynthesis; polypeptide chain elongation. Its function is as follows. Involved in peptide bond synthesis. Stimulates efficient translation and peptide-bond synthesis on native or reconstituted 70S ribosomes in vitro. Probably functions indirectly by altering the affinity of the ribosome for aminoacyl-tRNA, thus increasing their reactivity as acceptors for peptidyl transferase. The polypeptide is Elongation factor P (Ralstonia nicotianae (strain ATCC BAA-1114 / GMI1000) (Ralstonia solanacearum)).